A 124-amino-acid chain; its full sequence is Large ribosomal subunit protein bL12 (124 aa).

It belongs to the bacterial ribosomal protein bL12 family. Homodimer. Part of the ribosomal stalk of the 50S ribosomal subunit. Forms a multimeric L10(L12)X complex, where L10 forms an elongated spine to which 2 to 4 L12 dimers bind in a sequential fashion. Binds GTP-bound translation factors.

Forms part of the ribosomal stalk which helps the ribosome interact with GTP-bound translation factors. Is thus essential for accurate translation. The sequence is that of Large ribosomal subunit protein bL12 from Dehalococcoides mccartyi (strain ATCC BAA-2266 / KCTC 15142 / 195) (Dehalococcoides ethenogenes (strain 195)).